Consider the following 312-residue polypeptide: 4-hydroxyphenylacetate decarboxylase activating enzyme (312 aa).

The Radical SAM core domain occupies 16-299 (HDGPGCRTSV…MEHLQQLYLD (284 aa)). 7 residues coordinate [4Fe-4S] cluster: Cys30, Cys34, Cys37, Cys56, Cys62, Cys65, and Cys101. An S-adenosyl-L-methionine-binding site is contributed by 36–38 (WCA). 2 4Fe-4S ferredoxin-type domains span residues 47 to 79 (KHIM…FSED) and 80 to 112 (GKLK…CVKE). Residues Gly140, 189 to 191 (DVK), and His263 contribute to the S-adenosyl-L-methionine site.

Belongs to the organic radical-activating enzymes family. As to quaternary structure, monomer. [4Fe-4S] cluster is required as a cofactor.

The catalysed reaction is glycyl-[protein] + reduced [flavodoxin] + S-adenosyl-L-methionine = glycin-2-yl radical-[protein] + semiquinone [flavodoxin] + 5'-deoxyadenosine + L-methionine + H(+). Catalyzes activation of 4-hydroxyphenylacetate decarboxylase under anaerobic conditions by generation of an organic free radical on a glycine residue, via a homolytic cleavage of S-adenosyl-L-methionine (SAM). This is 4-hydroxyphenylacetate decarboxylase activating enzyme from Clostridium scatologenes.